The sequence spans 230 residues: 2,3-bisphosphoglycerate-dependent phosphoglycerate mutase (230 aa).

Substrate is bound by residues 8–15 (RHGQSEWN), 21–22 (TG), Arg60, 87–90 (ERHY), Lys98, 114–115 (RR), and 183–184 (GN). His9 acts as the Tele-phosphohistidine intermediate in catalysis. Catalysis depends on Glu87, which acts as the Proton donor/acceptor.

The protein belongs to the phosphoglycerate mutase family. BPG-dependent PGAM subfamily.

The catalysed reaction is (2R)-2-phosphoglycerate = (2R)-3-phosphoglycerate. It participates in carbohydrate degradation; glycolysis; pyruvate from D-glyceraldehyde 3-phosphate: step 3/5. Catalyzes the interconversion of 2-phosphoglycerate and 3-phosphoglycerate. In Lactobacillus acidophilus (strain ATCC 700396 / NCK56 / N2 / NCFM), this protein is 2,3-bisphosphoglycerate-dependent phosphoglycerate mutase.